The following is a 316-amino-acid chain: METWQELKVTVKREGEELVSNLLIELGAQGVAIEDSLDYVGNVDRFGEIFPEVEQQEEIVVTAYYPDTVDVTVVEVDLQARISELTDFMDLGEVKMGTTALAEEDWADNWKKYYEPARITHDLTIVPSWTDYEATAGEKIIKLDPGMAFGTGTHPTTKMSLFALEQVLRGGETVLDVGTGSGVLSIASSLLGAKEIFAYDLDDVAVRVAQENIELNPGMENIHVAAGDLLKGVEIEADVIVANILADILIHLTEDAYRLVKDEGYLIMSGIIKDKWDMVRQSAESAGFFLETHMIQGEWNACVFKKTKDISGVIGG.

Residues Thr-157, Gly-178, Asp-200, and Asn-243 each coordinate S-adenosyl-L-methionine.

It belongs to the methyltransferase superfamily. PrmA family.

The protein resides in the cytoplasm. The catalysed reaction is L-lysyl-[protein] + 3 S-adenosyl-L-methionine = N(6),N(6),N(6)-trimethyl-L-lysyl-[protein] + 3 S-adenosyl-L-homocysteine + 3 H(+). In terms of biological role, methylates ribosomal protein L11. The protein is Ribosomal protein L11 methyltransferase of Streptococcus pneumoniae (strain 70585).